Consider the following 208-residue polypeptide: 7-carboxy-7-deazaguanine synthase (208 aa).

Substrate-binding positions include 23 to 25 (LQG) and Arg38. A Radical SAM core domain is found at 29–208 (WAGGNAFFIR…LQTHKYLGVR (180 aa)). Positions 42, 46, and 49 each coordinate [4Fe-4S] cluster. Substrate is bound at residue Thr83. S-adenosyl-L-methionine-binding positions include Gly85 and 126 to 128 (SPK).

Belongs to the radical SAM superfamily. 7-carboxy-7-deazaguanine synthase family. As to quaternary structure, homodimer. [4Fe-4S] cluster serves as cofactor. Requires S-adenosyl-L-methionine as cofactor. It depends on Mg(2+) as a cofactor.

It catalyses the reaction 6-carboxy-5,6,7,8-tetrahydropterin + H(+) = 7-carboxy-7-deazaguanine + NH4(+). It functions in the pathway purine metabolism; 7-cyano-7-deazaguanine biosynthesis. In terms of biological role, catalyzes the complex heterocyclic radical-mediated conversion of 6-carboxy-5,6,7,8-tetrahydropterin (CPH4) to 7-carboxy-7-deazaguanine (CDG), a step common to the biosynthetic pathways of all 7-deazapurine-containing compounds. The polypeptide is 7-carboxy-7-deazaguanine synthase (Synechocystis sp. (strain ATCC 27184 / PCC 6803 / Kazusa)).